Consider the following 81-residue polypeptide: Acyl carrier protein (81 aa).

Residues 4 to 79 (DEVYSRVRKI…DAVNYILSKK (76 aa)) form the Carrier domain. The residue at position 39 (Ser39) is an O-(pantetheine 4'-phosphoryl)serine.

This sequence belongs to the acyl carrier protein (ACP) family. Post-translationally, 4'-phosphopantetheine is transferred from CoA to a specific serine of apo-ACP by AcpS. This modification is essential for activity because fatty acids are bound in thioester linkage to the sulfhydryl of the prosthetic group.

Its subcellular location is the cytoplasm. It functions in the pathway lipid metabolism; fatty acid biosynthesis. Its function is as follows. Carrier of the growing fatty acid chain in fatty acid biosynthesis. The polypeptide is Acyl carrier protein (Synechococcus sp. (strain JA-3-3Ab) (Cyanobacteria bacterium Yellowstone A-Prime)).